A 299-amino-acid chain; its full sequence is Oxaloacetate decarboxylase (299 aa).

Ser57 is a binding site for substrate. Mg(2+) is bound at residue Asp95. Substrate is bound by residues Arg167 and His243.

This sequence belongs to the isocitrate lyase/PEP mutase superfamily. Oxaloacetate decarboxylase family. As to quaternary structure, homotetramer; dimer of dimers. The cofactor is Mg(2+).

The enzyme catalyses oxaloacetate + H(+) = pyruvate + CO2. In terms of biological role, catalyzes the decarboxylation of oxaloacetate into pyruvate. Seems to play a role in maintaining cellular concentrations of bicarbonate and pyruvate. The sequence is that of Oxaloacetate decarboxylase from Paraburkholderia xenovorans (strain LB400).